Reading from the N-terminus, the 795-residue chain is Protein translocase subunit SecA 2 (795 aa).

Residues Q84, G102–T106, and D496 each bind ATP.

Belongs to the SecA family. As to quaternary structure, monomer and homodimer. Part of the essential Sec protein translocation apparatus which comprises SecA, SecYEG and auxiliary proteins SecDF. Other proteins may also be involved.

The protein localises to the cell membrane. The protein resides in the cytoplasm. It catalyses the reaction ATP + H2O + cellular proteinSide 1 = ADP + phosphate + cellular proteinSide 2.. In terms of biological role, part of the Sec protein translocase complex. Interacts with the SecYEG preprotein conducting channel. Has a central role in coupling the hydrolysis of ATP to the transfer of proteins into and across the cell membrane, serving as an ATP-driven molecular motor driving the stepwise translocation of polypeptide chains across the membrane. This Streptococcus agalactiae serotype V (strain ATCC BAA-611 / 2603 V/R) protein is Protein translocase subunit SecA 2.